The following is a 414-amino-acid chain: Ribulose bisphosphate carboxylase/oxygenase activase (414 aa).

Residue 37–44 coordinates ATP; the sequence is GRKGEGKT. The interval 296 to 326 is disordered; that stretch reads RGYQTAPPPEAPVIQPVNNSSHKQKTSNTHL. The segment covering 311-326 has biased composition (polar residues); that stretch reads PVNNSSHKQKTSNTHL.

It belongs to the RuBisCO activase family.

Functionally, activation of RuBisCO (ribulose-1,5-bisohosphate carboxylase/oxygenase; EC 4.1.1.39) involves the ATP-dependent carboxylation of the epsilon-amino group of lysine leading to a carbamate structure. This is Ribulose bisphosphate carboxylase/oxygenase activase (rca) from Nostoc sp. (strain PCC 7120 / SAG 25.82 / UTEX 2576).